The primary structure comprises 217 residues: Large ribosomal subunit protein uL3 (217 aa).

Position 152 is an N5-methylglutamine (glutamine 152).

Belongs to the universal ribosomal protein uL3 family. Part of the 50S ribosomal subunit. Forms a cluster with proteins L14 and L19. Post-translationally, methylated by PrmB.

Functionally, one of the primary rRNA binding proteins, it binds directly near the 3'-end of the 23S rRNA, where it nucleates assembly of the 50S subunit. This Blochmanniella pennsylvanica (strain BPEN) protein is Large ribosomal subunit protein uL3.